The sequence spans 593 residues: FAD-binding monooxygenase acrE (593 aa).

FAD is bound by residues threonine 61 to phenylalanine 64, aspartate 73 to serine 74, and tyrosine 79. Position 71 to 73 (arginine 71 to aspartate 73) interacts with NADP(+). NADP(+)-binding positions include threonine 200–glutamine 206 and arginine 223–serine 224.

Belongs to the FAD-binding monooxygenase family. FAD serves as cofactor.

It functions in the pathway secondary metabolite biosynthesis. Its function is as follows. FAD-binding monooxygenase; part of the cluster that mediates the biosynthesis of acurin A, a highly reduced polyketide coupled to a serine via a peptide bond. The activities of the highly reducing polyketide synthase acrA and the nonribosomal peptide synthetase acrB are collectively responsible for the synthesis of the acurin A core structure with a heptaketide backbone produced by acrA covalently fused to a L-serine by acrB. After the formation of the PK-NRP hybrid product, it is detached from acrB by reductive release to set up the formation of the lactam ring by aldol condensation. The hydrolyase acrC then catalyzes water loss to generate a double bond in the ring. This double bond is probably reduced, which is followed by three oxidations at C-22 to generate the carboxylic acid moiety, involving probably the FAD-binding monooxygenase acrE and the cytochrome P450 monooxygenases acrD and acrF. Finally, a last methylation step performed by the O-methyltransferase acrG leads to the production of acurin A. This chain is FAD-binding monooxygenase acrE, found in Aspergillus aculeatus (strain ATCC 16872 / CBS 172.66 / WB 5094).